Consider the following 126-residue polypeptide: Large ribosomal subunit protein bL17 (126 aa).

It belongs to the bacterial ribosomal protein bL17 family. As to quaternary structure, part of the 50S ribosomal subunit. Contacts protein L32.

This Lawsonia intracellularis (strain PHE/MN1-00) protein is Large ribosomal subunit protein bL17.